The sequence spans 361 residues: Epoxyqueuosine reductase (361 aa).

Asp-147 functions as the Proton donor in the catalytic mechanism. The 4Fe-4S ferredoxin-type domain maps to Val-193 to Arg-222. Positions 202, 205, 208, 212, 228, 255, 258, and 262 each coordinate [4Fe-4S] cluster.

Belongs to the QueG family. As to quaternary structure, monomer. Cob(II)alamin is required as a cofactor. It depends on [4Fe-4S] cluster as a cofactor.

It is found in the cytoplasm. The enzyme catalyses epoxyqueuosine(34) in tRNA + AH2 = queuosine(34) in tRNA + A + H2O. It participates in tRNA modification; tRNA-queuosine biosynthesis. In terms of biological role, catalyzes the conversion of epoxyqueuosine (oQ) to queuosine (Q), which is a hypermodified base found in the wobble positions of tRNA(Asp), tRNA(Asn), tRNA(His) and tRNA(Tyr). The sequence is that of Epoxyqueuosine reductase from Pseudomonas aeruginosa (strain ATCC 15692 / DSM 22644 / CIP 104116 / JCM 14847 / LMG 12228 / 1C / PRS 101 / PAO1).